Here is a 380-residue protein sequence, read N- to C-terminus: Alpha-N-acetylneuraminate alpha-2,8-sialyltransferase ST8SIA3 (380 aa).

At 1 to 17 the chain is on the cytoplasmic side; the sequence is MRNCKMARVASVLGLVM. A helical; Signal-anchor for type II membrane protein transmembrane segment spans residues 18 to 33; it reads LSVALLILSLISYVSL. The Lumenal segment spans residues 34-380; sequence KKENIFTTPK…LTKLTLSHCA (347 aa). N-linked (GlcNAc...) asparagine glycosylation is found at Asn93 and Asn113. Intrachain disulfides connect Cys162-Cys313 and Cys176-Cys379. CMP-N-acetyl-beta-neuraminate-binding residues include Asn167 and Asn190. A glycan (N-linked (GlcNAc...) asparagine) is linked at Asn206. CMP-N-acetyl-beta-neuraminate is bound by residues Ser300, Thr301, Gly302, Trp322, Tyr336, and His337. The active-site Proton donor/acceptor is the His354.

Belongs to the glycosyltransferase 29 family. Homodimer. Expressed in neurons in brain with higher expression in the striatum than in the hippocampus, cortex, and cerebellum (at protein level). Expressed in testes.

It localises to the golgi apparatus membrane. It catalyses the reaction a ganglioside GM3 (d18:1(4E)) + CMP-N-acetyl-beta-neuraminate = a ganglioside GD3 (d18:1(4E)) + CMP + H(+). The catalysed reaction is a ganglioside GM3 + CMP-N-acetyl-beta-neuraminate = a ganglioside GD3 + CMP + H(+). It carries out the reaction an N-acetyl-alpha-neuraminyl-(2-&gt;3)-beta-D-galactosyl derivative + CMP-N-acetyl-beta-neuraminate = an N-acetyl-alpha-neuraminyl-(2-&gt;8)-N-acetyl-alpha-neuraminyl-(2-&gt;3)-beta-D-galactosyl derivative + CMP + H(+). The enzyme catalyses an N-acetyl-alpha-neuraminyl-(2-&gt;3)-beta-D-galactosyl-(1-&gt;4)-N-acetyl-beta-D-glucosaminyl derivative + CMP-N-acetyl-beta-neuraminate = an alpha-Neu5Ac-(2-&gt;8)-alpha-Neu5Ac-(2-&gt;3)-beta-D-Gal-(1-&gt;4)-beta-D-GlcNAc derivative + CMP + H(+). It functions in the pathway protein modification; protein glycosylation. Functionally, catalyzes the transfer of sialic acid from a CMP-linked sialic acid donor onto a terminal alpha-2,3-, alpha-2,6-, or alpha-2,8-linked sialic acid of an acceptor, such as N-linked oligosaccharides of glycoproteins and glycolipids through alpha-2,8-linkages. Forms oligosialic and polysialic acid on various sialylated N-acetyllactosamine oligosaccharides of glycoproteins, including FETUB N-glycans, a2-HS-glycoprotein (AHSG) and alpha 2,3-sialylated glycosphingolipids, such as alpha 2,3-sialylparagloboside and ganglioside GM3 and to a lesser extent NCAM1 N-glycans. However, it is much more specific to N-linked oligosaccharides of glycoproteins than glycosphingolipids. 2,3-sialylparagloboside served as the best acceptor substrate among the glycolipids. alpha-Neu5Ac-(2-&gt;8)-alpha-Neu5Ac-(2-&gt;3)-beta-D-Gal-(1-&gt;4)-6S-D-GlcNAc and monosialyl and disialyl N-acetyllactosamines are the best acceptor substrates among glycoproteins. May play critical role in the striatum by mediating the formation of disialylated and trisialylated terminal glycotopes on N- and O-glycans of specific striatal proteins, regulating their distribution in lipid rafts, affecting their interaction with other binding partners, and subsequently modulating striatal functions. This chain is Alpha-N-acetylneuraminate alpha-2,8-sialyltransferase ST8SIA3, found in Mus musculus (Mouse).